A 475-amino-acid polypeptide reads, in one-letter code: Ribulose bisphosphate carboxylase large chain (475 aa).

Residues N123 and T173 each coordinate substrate. K175 serves as the catalytic Proton acceptor. K177 is a substrate binding site. The Mg(2+) site is built by K201, D203, and E204. K201 carries the post-translational modification N6-carboxylysine. Catalysis depends on H294, which acts as the Proton acceptor. R295, H327, and S379 together coordinate substrate.

The protein belongs to the RuBisCO large chain family. Type I subfamily. As to quaternary structure, heterohexadecamer of 8 large chains and 8 small chains. Mg(2+) serves as cofactor.

The protein resides in the plastid. It is found in the chloroplast. The enzyme catalyses 2 (2R)-3-phosphoglycerate + 2 H(+) = D-ribulose 1,5-bisphosphate + CO2 + H2O. It catalyses the reaction D-ribulose 1,5-bisphosphate + O2 = 2-phosphoglycolate + (2R)-3-phosphoglycerate + 2 H(+). Functionally, ruBisCO catalyzes two reactions: the carboxylation of D-ribulose 1,5-bisphosphate, the primary event in carbon dioxide fixation, as well as the oxidative fragmentation of the pentose substrate in the photorespiration process. Both reactions occur simultaneously and in competition at the same active site. The polypeptide is Ribulose bisphosphate carboxylase large chain (Bigelowiella natans (Pedinomonas minutissima)).